The sequence spans 164 residues: Phosphopantetheine adenylyltransferase (164 aa).

A substrate-binding site is contributed by Ser10. Residues 10–11 and His18 contribute to the ATP site; that span reads SF. Substrate contacts are provided by Lys42, Thr79, and Arg93. ATP is bound by residues 94-96, Glu104, and 129-135; these read GLR and VRPIAAT.

The protein belongs to the bacterial CoaD family. As to quaternary structure, homohexamer. Mg(2+) serves as cofactor.

It is found in the cytoplasm. The enzyme catalyses (R)-4'-phosphopantetheine + ATP + H(+) = 3'-dephospho-CoA + diphosphate. Its pathway is cofactor biosynthesis; coenzyme A biosynthesis; CoA from (R)-pantothenate: step 4/5. In terms of biological role, reversibly transfers an adenylyl group from ATP to 4'-phosphopantetheine, yielding dephospho-CoA (dPCoA) and pyrophosphate. This is Phosphopantetheine adenylyltransferase from Bradyrhizobium sp. (strain BTAi1 / ATCC BAA-1182).